Here is a 701-residue protein sequence, read N- to C-terminus: Polyribonucleotide nucleotidyltransferase (701 aa).

Mg(2+) is bound by residues Asp483 and Asp489. Positions 550–609 (PRIYTLHIPTDKIRDVIGPGGKVIRGIIEQTGVKIDVEDDGTIHVASADEASANKAIQII) constitute a KH domain. Residues 619-686 (GKTYLGKVVR…EGNKIKLSRK (68 aa)) form the S1 motif domain.

The protein belongs to the polyribonucleotide nucleotidyltransferase family. Mg(2+) is required as a cofactor.

Its subcellular location is the cytoplasm. It carries out the reaction RNA(n+1) + phosphate = RNA(n) + a ribonucleoside 5'-diphosphate. Its function is as follows. Involved in mRNA degradation. Catalyzes the phosphorolysis of single-stranded polyribonucleotides processively in the 3'- to 5'-direction. This Solibacter usitatus (strain Ellin6076) protein is Polyribonucleotide nucleotidyltransferase.